A 189-amino-acid chain; its full sequence is Ion-translocating oxidoreductase complex subunit B (189 aa).

The hydrophobic stretch occupies residues 1–26 (MSGIFIAIILLTILALLFGILLGFAA). Residues 32–90 (EGDPLVDQLEALLPQTQCGQCGYPGCRPYAEAIANGEKINLCPPGGSATMEKLAEMAGV) enclose the 4Fe-4S domain. The [4Fe-4S] cluster site is built by Cys49, Cys52, Cys57, Cys73, Cys114, Cys117, Cys120, Cys124, Cys144, Cys147, Cys150, and Cys154. 4Fe-4S ferredoxin-type domains lie at 105-134 (KVAY…GSGK) and 135-164 (LMHT…MLPV).

Belongs to the 4Fe4S bacterial-type ferredoxin family. RnfB subfamily. In terms of assembly, the complex is composed of six subunits: RnfA, RnfB, RnfC, RnfD, RnfE and RnfG. [4Fe-4S] cluster is required as a cofactor.

It is found in the cell inner membrane. In terms of biological role, part of a membrane-bound complex that couples electron transfer with translocation of ions across the membrane. The protein is Ion-translocating oxidoreductase complex subunit B of Shewanella sediminis (strain HAW-EB3).